Here is a 473-residue protein sequence, read N- to C-terminus: MPSSLKLLSNLIAESVDKIEQRCAAQGVPFPELNEVLSFQSEAIRSDTDVAEAIQVIAASAAQLLATAMSPIATLSVVAHQWDVPACLGAANDANVAEILRDAGPKGAHIDDIAKRNGTNAGRLGRVLRLLASHHIFREVSPDVFANNRISSLLDSKKPVEELEKNPQSKYTETSLVNTFVSFGAGEFFKGGAFLSETLRDPVFGHSDEANHSAFNKAFKFDVSFFEWMERPENKDVLSRFSLMMRATTDLLPDAAILNGFDFGSLPDGALVVDVAGGIGSLSMVLAKTFPKLNFVVEDRPQLASDAEPYWKSNLPEALESGRVRLVAHDMFTPQPDLGSPVDVFVLRGILHDWADSYGIRLLSHLRAAAGPQTKLVVIEILLESPCRDPETSTIKGCEPRTVPEPLLANMGAADSVDYSMDMMMMGFGNGQERTLRHYVKILSETGWELKEVIHIDSLHIGPLRPHLIAVPV.

S-adenosyl-L-methionine-binding positions include 276 to 277, D299, 330 to 331, and R348; these read AG and DM. The active-site Proton acceptor is the H352.

It belongs to the class I-like SAM-binding methyltransferase superfamily. Cation-independent O-methyltransferase family.

It functions in the pathway secondary metabolite biosynthesis. O-methyltransferase, part of the gene cluster that mediates the biosynthesis of melleolides, a range of antifungal and phytotoxic polyketide derivatives composed of an orsellinic acid (OA) moiety esterified to various sesquiterpene alcohols. The first step in melleolides biosynthesis is performed by the delta(6)-protoilludene synthase PRO1 which catalyzes the cyclization of farnesyl diphosphate to protoilludene. The orsellinic acid synthase armB produces OA by condensing acetyl-CoA with 3 malonyl-CoA units in a three-round chain elongation reaction folowed by a C2-C7 ring closure. ArmB further catalyzes the trans-esterification of OA to the various sesquiterpene alcohols resulting from the hydroxylation of protoilludene. The melleolides cluster also includes 5 cytochrome P450 monooxygenases, 4 NAD(+)-dependent oxidoreductases, one flavin-dependent oxidoreductase, and one O-methyltransferase. The cytochrome P450 monooxygenases may be involved in protoilludene hydroxylation to elaborate melleolides with multiple alcohol groups, such as melleolide D, which carries alcohol functionalities at C-4, C-5, C-10, and C-13. The role of the NAD(+)-dependent enzymes remains unknown. Numerous melleolides, including arnamial, show 5'-O-methylation of the aromatic moiety which may be catalyzed by the methyltransferase encoded in the cluster. The flavin-dependent oxidoreductase might represent the dehydrogenase yielding the aldehyde in position 1 of arnamial and other melleolides. Finally, several halogenase localized outside of the cluster, are able to catalyze the transfer of a single chlorine atom to the melleolide backbone, resulting in a 6'-chloromelleolide product. This chain is O-methyltransferase ARMGADRAFT_1088206, found in Armillaria gallica (Bulbous honey fungus).